A 420-amino-acid chain; its full sequence is UDP-N-acetylglucosamine 1-carboxyvinyltransferase 1 (420 aa).

A phosphoenolpyruvate-binding site is contributed by 22 to 23 (KN). A UDP-N-acetyl-alpha-D-glucosamine-binding site is contributed by Arg91. The active-site Proton donor is Cys115. Position 115 is a 2-(S-cysteinyl)pyruvic acid O-phosphothioketal (Cys115). Residues 120–124 (RPMDL), Asp303, and Val325 contribute to the UDP-N-acetyl-alpha-D-glucosamine site.

The protein belongs to the EPSP synthase family. MurA subfamily.

Its subcellular location is the cytoplasm. It catalyses the reaction phosphoenolpyruvate + UDP-N-acetyl-alpha-D-glucosamine = UDP-N-acetyl-3-O-(1-carboxyvinyl)-alpha-D-glucosamine + phosphate. It functions in the pathway cell wall biogenesis; peptidoglycan biosynthesis. Cell wall formation. Adds enolpyruvyl to UDP-N-acetylglucosamine. In Carboxydothermus hydrogenoformans (strain ATCC BAA-161 / DSM 6008 / Z-2901), this protein is UDP-N-acetylglucosamine 1-carboxyvinyltransferase 1.